Here is a 289-residue protein sequence, read N- to C-terminus: ATP synthase gamma chain (289 aa).

The protein belongs to the ATPase gamma chain family. In terms of assembly, F-type ATPases have 2 components, CF(1) - the catalytic core - and CF(0) - the membrane proton channel. CF(1) has five subunits: alpha(3), beta(3), gamma(1), delta(1), epsilon(1). CF(0) has three main subunits: a, b and c.

It localises to the cell inner membrane. Functionally, produces ATP from ADP in the presence of a proton gradient across the membrane. The gamma chain is believed to be important in regulating ATPase activity and the flow of protons through the CF(0) complex. The sequence is that of ATP synthase gamma chain from Haemophilus influenzae (strain PittGG).